The primary structure comprises 253 residues: DNA polymerase sliding clamp (253 aa).

It belongs to the PCNA family. In terms of assembly, homotrimer. The subunits circularize to form a toroid; DNA passes through its center. Replication factor C (RFC) is required to load the toroid on the DNA.

Sliding clamp subunit that acts as a moving platform for DNA processing. Responsible for tethering the catalytic subunit of DNA polymerase and other proteins to DNA during high-speed replication. The polypeptide is DNA polymerase sliding clamp (Methanopyrus kandleri (strain AV19 / DSM 6324 / JCM 9639 / NBRC 100938)).